The sequence spans 89 residues: DNA/RNA-binding protein Alba (89 aa).

The residue at position 11 (Lys-11) is an N6-acetyllysine.

The protein belongs to the histone-like Alba family. In terms of processing, acetylated. Acetylation at Lys-11 decreases DNA-binding affinity.

It is found in the cytoplasm. It localises to the chromosome. Functionally, binds double-stranded DNA tightly but without sequence specificity. Involved in DNA compaction. This is DNA/RNA-binding protein Alba from Thermoplasma acidophilum (strain ATCC 25905 / DSM 1728 / JCM 9062 / NBRC 15155 / AMRC-C165).